We begin with the raw amino-acid sequence, 74 residues long: ATP synthase subunit 9, mitochondrial (74 aa).

The next 2 helical transmembrane spans lie at 16-36 (GLIG…IGVS) and 50-70 (ILGF…AFLL).

It belongs to the ATPase C chain family. F-type ATPases have 2 components, CF(1) - the catalytic core - and CF(0) - the membrane proton channel. CF(1) has five subunits: alpha(3), beta(3), gamma(1), delta(1), epsilon(1). CF(0) has three main subunits: a, b and c.

Its subcellular location is the mitochondrion inner membrane. In terms of biological role, mitochondrial membrane ATP synthase (F(1)F(0) ATP synthase or Complex V) produces ATP from ADP in the presence of a proton gradient across the membrane which is generated by electron transport complexes of the respiratory chain. F-type ATPases consist of two structural domains, F(1) - containing the extramembraneous catalytic core and F(0) - containing the membrane proton channel, linked together by a central stalk and a peripheral stalk. During catalysis, ATP synthesis in the catalytic domain of F(1) is coupled via a rotary mechanism of the central stalk subunits to proton translocation. Part of the complex F(0) domain. A homomeric c-ring of probably 10 subunits is part of the complex rotary element. This Neurospora crassa (strain ATCC 24698 / 74-OR23-1A / CBS 708.71 / DSM 1257 / FGSC 987) protein is ATP synthase subunit 9, mitochondrial (atp-9).